The following is a 294-amino-acid chain: MTKAVLTSISQLALKALLYEVSLSPKPGLVDRFDNGAHDDMSFMTFIDSMIALSPFFQAYIETGFAYAKEEPLLLFNRLRQLGQKAEETMFCATQGINTHKGLNFSMALLLGATGAYLARTPHLMTDLGRFSKEDTLAICRLVKPMTAHLIQTDLGHLNTKKEFTYGEQLFVTYGIKGPRGEASEGFTTLTDHALPYFRQMISQNDPETSQLRLLVYLMSIVEDGNLIHRGGIEAWKGVKADMRLLLQQDLSTTDLRLALSSYNQCLINQHLSPGGAADLLALTFYFAFLEKLL.

It belongs to the CitG/MdcB family.

The catalysed reaction is 3'-dephospho-CoA + ATP = 2'-(5''-triphospho-alpha-D-ribosyl)-3'-dephospho-CoA + adenine. The sequence is that of Probable 2-(5''-triphosphoribosyl)-3'-dephosphocoenzyme-A synthase from Streptococcus pyogenes serotype M3 (strain ATCC BAA-595 / MGAS315).